We begin with the raw amino-acid sequence, 180 residues long: Bifunctional protein PyrR (180 aa).

Residues 101–113 carry the PRPP-binding motif; it reads VILIDDVLFTGRT.

Belongs to the purine/pyrimidine phosphoribosyltransferase family. PyrR subfamily. As to quaternary structure, homodimer and homohexamer; in equilibrium.

The enzyme catalyses UMP + diphosphate = 5-phospho-alpha-D-ribose 1-diphosphate + uracil. Functionally, regulates transcriptional attenuation of the pyrimidine nucleotide (pyr) operon by binding in a uridine-dependent manner to specific sites on pyr mRNA. This disrupts an antiterminator hairpin in the RNA and favors formation of a downstream transcription terminator, leading to a reduced expression of downstream genes. Also displays a weak uracil phosphoribosyltransferase activity which is not physiologically significant. The polypeptide is Bifunctional protein PyrR (Oceanobacillus iheyensis (strain DSM 14371 / CIP 107618 / JCM 11309 / KCTC 3954 / HTE831)).